The sequence spans 524 residues: MTDKANNTPVAQDENKLIAERRVKLEKIRSNCSANGFPNDFNREHLAADIQAEHGEKTKEELEELQVTYAIAGRVMAKRGPFLVIQDSSGRIQGYAEKTVQKEIRAKWGSLDIGDIVGIKGILHKSGKGDLYVNMDHYSLLTKSLRPLPEKFHGLSDQETKYRQRYIDLIINEDTRNTFKMRSKIVAGIRNFLTQRDFMEVETPMLQIIPGGATAKPFMTHHNTFDLDMYLRIAPELNLKRLVVGGFDRVFEINRSFRNEGISTRHNPEFTMIEFYQAYADYHDLMNTTEEMLRTIAQDVLGTTTIRNTVKNSEGEVVEEKFYDLGKPFVRLSMVDAILQYGKDHRGAEQLDEAALRDPENNFDAIKAMAKAVGVKENSASKVWGPGKYICEIFEEVAEHLLDQPTFITEYPWEVSPLARRNDENSFITDRFEFFVGGRELANGFSELNDAEDQAERFQKQVAEKDAGDDEAMHYDADYINALEYGLPPTAGEGIGIDRLVMLFTDSPTIKDVILFPHMRPEAE.

E433 and E440 together coordinate Mg(2+).

Belongs to the class-II aminoacyl-tRNA synthetase family. Homodimer. It depends on Mg(2+) as a cofactor.

The protein resides in the cytoplasm. It carries out the reaction tRNA(Lys) + L-lysine + ATP = L-lysyl-tRNA(Lys) + AMP + diphosphate. The protein is Lysine--tRNA ligase of Colwellia psychrerythraea (strain 34H / ATCC BAA-681) (Vibrio psychroerythus).